Consider the following 151-residue polypeptide: Phosphoribosyl-AMP cyclohydrolase (151 aa).

Polar residues predominate over residues 1 to 13 (MMTLTFASPPQNK). The interval 1 to 20 (MMTLTFASPPQNKSDLETGP) is disordered. Asp93 serves as a coordination point for Mg(2+). Cys94 provides a ligand contact to Zn(2+). The Mg(2+) site is built by Asp95 and Asp97. Zn(2+) is bound by residues Cys112 and Cys119.

The protein belongs to the PRA-CH family. As to quaternary structure, homodimer. The cofactor is Mg(2+). Requires Zn(2+) as cofactor.

It localises to the cytoplasm. The catalysed reaction is 1-(5-phospho-beta-D-ribosyl)-5'-AMP + H2O = 1-(5-phospho-beta-D-ribosyl)-5-[(5-phospho-beta-D-ribosylamino)methylideneamino]imidazole-4-carboxamide. Its pathway is amino-acid biosynthesis; L-histidine biosynthesis; L-histidine from 5-phospho-alpha-D-ribose 1-diphosphate: step 3/9. Its function is as follows. Catalyzes the hydrolysis of the adenine ring of phosphoribosyl-AMP. In Sinorhizobium medicae (strain WSM419) (Ensifer medicae), this protein is Phosphoribosyl-AMP cyclohydrolase.